Reading from the N-terminus, the 298-residue chain is UDP-3-O-acyl-N-acetylglucosamine deacetylase (298 aa).

Residues His-80, His-239, and Asp-243 each coordinate Zn(2+). Catalysis depends on His-266, which acts as the Proton donor.

Belongs to the LpxC family. Zn(2+) serves as cofactor.

The catalysed reaction is a UDP-3-O-[(3R)-3-hydroxyacyl]-N-acetyl-alpha-D-glucosamine + H2O = a UDP-3-O-[(3R)-3-hydroxyacyl]-alpha-D-glucosamine + acetate. The protein operates within glycolipid biosynthesis; lipid IV(A) biosynthesis; lipid IV(A) from (3R)-3-hydroxytetradecanoyl-[acyl-carrier-protein] and UDP-N-acetyl-alpha-D-glucosamine: step 2/6. Its function is as follows. Catalyzes the hydrolysis of UDP-3-O-myristoyl-N-acetylglucosamine to form UDP-3-O-myristoylglucosamine and acetate, the committed step in lipid A biosynthesis. This is UDP-3-O-acyl-N-acetylglucosamine deacetylase from Blochmanniella floridana.